The following is a 244-amino-acid chain: 6-carboxyhexanoate--CoA ligase (244 aa).

Belongs to the BioW family. In terms of assembly, homodimer. Mg(2+) is required as a cofactor.

The enzyme catalyses heptanedioate + ATP + CoA = 6-carboxyhexanoyl-CoA + AMP + diphosphate. It functions in the pathway metabolic intermediate metabolism; pimeloyl-CoA biosynthesis; pimeloyl-CoA from pimelate: step 1/1. In terms of biological role, catalyzes the transformation of pimelate into pimeloyl-CoA with concomitant hydrolysis of ATP to AMP. This is 6-carboxyhexanoate--CoA ligase from Methanococcus maripaludis (strain DSM 14266 / JCM 13030 / NBRC 101832 / S2 / LL).